The primary structure comprises 586 residues: Succinate dehydrogenase flavoprotein subunit (586 aa).

Residues 10 to 15 (GGGLAG) and 33 to 48 (SIVP…AQGG) each bind FAD. Histidine 41 bears the Tele-8alpha-FAD histidine mark. Substrate-binding residues include histidine 236 and serine 250. The active-site Proton acceptor is the arginine 285. Histidine 352 contributes to the substrate binding site. Position 376 (glutamate 376) interacts with FAD. Arginine 386 contacts substrate. Position 391 to 392 (391 to 392 (SL)) interacts with FAD.

It belongs to the FAD-dependent oxidoreductase 2 family. FRD/SDH subfamily. As to quaternary structure, in B.subtilis succinate dehydrogenase forms part of an enzyme complex containing three subunits: a flavoprotein, an iron-sulfur protein and cytochrome b-558. Interacts with FloT. It depends on FAD as a cofactor.

Its subcellular location is the cell membrane. It localises to the membrane raft. The enzyme catalyses a quinone + succinate = fumarate + a quinol. It functions in the pathway carbohydrate metabolism; tricarboxylic acid cycle; fumarate from succinate (bacterial route): step 1/1. The protein is Succinate dehydrogenase flavoprotein subunit (sdhA) of Bacillus subtilis (strain 168).